The sequence spans 118 residues: Large ribosomal subunit protein bL19 (118 aa).

This sequence belongs to the bacterial ribosomal protein bL19 family.

Functionally, this protein is located at the 30S-50S ribosomal subunit interface and may play a role in the structure and function of the aminoacyl-tRNA binding site. The sequence is that of Large ribosomal subunit protein bL19 from Campylobacter curvus (strain 525.92).